A 235-amino-acid polypeptide reads, in one-letter code: Large ribosomal subunit protein uL3 (235 aa).

Belongs to the universal ribosomal protein uL3 family. In terms of assembly, part of the 50S ribosomal subunit. Forms a cluster with proteins L14 and L19.

One of the primary rRNA binding proteins, it binds directly near the 3'-end of the 23S rRNA, where it nucleates assembly of the 50S subunit. This chain is Large ribosomal subunit protein uL3, found in Frankia casuarinae (strain DSM 45818 / CECT 9043 / HFP020203 / CcI3).